The sequence spans 68 residues: Large ribosomal subunit protein bL35 (68 aa).

The protein belongs to the bacterial ribosomal protein bL35 family.

The chain is Large ribosomal subunit protein bL35 from Orientia tsutsugamushi (strain Boryong) (Rickettsia tsutsugamushi).